Reading from the N-terminus, the 250-residue chain is Isoprenyl transferase (250 aa).

Asp-27 is a catalytic residue. Asp-27 serves as a coordination point for Mg(2+). Substrate contacts are provided by residues 28-31 (GNRR), Trp-32, His-48, and 76-78 (STE). Residue Asn-79 is the Proton acceptor of the active site. Residues Phe-80, Arg-82, Arg-199, and 205-207 (RVS) contribute to the substrate site. A Mg(2+)-binding site is contributed by Glu-218.

This sequence belongs to the UPP synthase family. In terms of assembly, homodimer. Mg(2+) serves as cofactor.

Catalyzes the condensation of isopentenyl diphosphate (IPP) with allylic pyrophosphates generating different type of terpenoids. The sequence is that of Isoprenyl transferase from Chlamydia caviae (strain ATCC VR-813 / DSM 19441 / 03DC25 / GPIC) (Chlamydophila caviae).